A 393-amino-acid polypeptide reads, in one-letter code: Stimulated by retinoic acid gene 8 protein (393 aa).

Residues 1-11 show a composition bias toward polar residues; sequence MATPGEGNQPS. The tract at residues 1 to 25 is disordered; it reads MATPGEGNQPSDDGAPQPLAQLQKL. The Nuclear localization signal (NLS) motif lies at 28 to 33; it reads RVVRRR. The stretch at 66-95 forms a coiled coil; the sequence is QVLNRTKIHIQEQEESLDKLLKLKASFNLQ. The segment at 124-201 is disordered; sequence FLQDSPPEWF…EEKKVDLSHS (78 aa). The span at 141-192 shows a compositional bias: acidic residues; sequence DAEEEGEEEGEEEGEEGEEEEEGDEEGEEEEENGEEREVEEYQEEEEEEEEE. The short motif at 209 to 218 is the Nuclear export signal (NES) element; the sequence is LMEFERYLNF.

Interacts with XPO1. Interacts with MEIOSIN. Post-translationally, phosphorylated in P19 EC cells. In terms of tissue distribution, expressed exclusively in premeiotic germ cells in both sexes. In females, is expressed in the embryonic ovary. In males, is expressed in pubertal and adult testes, in premeiotic spermatogenic cells. Expressed by some type A and B spermatogonia, preleptotene spermatocytes, and early leptotene spermatocytes (at protein level). Expression begins in late undifferentiated spermatogonia and persists during differentiating spermatogonia (at protein level).

The protein localises to the cytoplasm. The protein resides in the nucleus. Its function is as follows. Meiosis-inducer required for the transition into meiosis for both female and male germ cells. In female germ cells, acts downstream of ZGLP1 as a key effector of the meiotic program: required for premeiotic DNA replication and subsequent events in meiotic prophase. During spermatogenesis, next to its role in meiotic initiation, promotes (but is not required for) spermatogonial differentiation. In complex with MEIOSIN, directly activates the transcription of a subset of critical meiotic genes playing a central role in cell-cycle switching from mitosis to meiosis. The protein is Stimulated by retinoic acid gene 8 protein of Mus musculus (Mouse).